The sequence spans 148 residues: SsrA-binding protein (148 aa).

Belongs to the SmpB family.

It is found in the cytoplasm. Its function is as follows. Required for rescue of stalled ribosomes mediated by trans-translation. Binds to transfer-messenger RNA (tmRNA), required for stable association of tmRNA with ribosomes. tmRNA and SmpB together mimic tRNA shape, replacing the anticodon stem-loop with SmpB. tmRNA is encoded by the ssrA gene; the 2 termini fold to resemble tRNA(Ala) and it encodes a 'tag peptide', a short internal open reading frame. During trans-translation Ala-aminoacylated tmRNA acts like a tRNA, entering the A-site of stalled ribosomes, displacing the stalled mRNA. The ribosome then switches to translate the ORF on the tmRNA; the nascent peptide is terminated with the 'tag peptide' encoded by the tmRNA and targeted for degradation. The ribosome is freed to recommence translation, which seems to be the essential function of trans-translation. The chain is SsrA-binding protein from Burkholderia ambifaria (strain ATCC BAA-244 / DSM 16087 / CCUG 44356 / LMG 19182 / AMMD) (Burkholderia cepacia (strain AMMD)).